The primary structure comprises 226 residues: Ribose-5-phosphate isomerase A (226 aa).

Residues 33 to 36 (TGST), 86 to 89 (DGAD), and 99 to 102 (KGGG) each bind substrate. Glutamate 108 functions as the Proton acceptor in the catalytic mechanism. Lysine 126 is a binding site for substrate.

This sequence belongs to the ribose 5-phosphate isomerase family. As to quaternary structure, homodimer.

The catalysed reaction is aldehydo-D-ribose 5-phosphate = D-ribulose 5-phosphate. The protein operates within carbohydrate degradation; pentose phosphate pathway; D-ribose 5-phosphate from D-ribulose 5-phosphate (non-oxidative stage): step 1/1. In terms of biological role, catalyzes the reversible conversion of ribose-5-phosphate to ribulose 5-phosphate. In Bordetella bronchiseptica (strain ATCC BAA-588 / NCTC 13252 / RB50) (Alcaligenes bronchisepticus), this protein is Ribose-5-phosphate isomerase A.